A 97-amino-acid chain; its full sequence is RNA-binding protein YhbY (97 aa).

The 97-residue stretch at Met-1–Arg-97 folds into the CRM domain.

The sequence is that of RNA-binding protein YhbY (yhbY) from Escherichia coli O157:H7.